Consider the following 305-residue polypeptide: MKKIIFMGTPSYATCILKALVENENFKLVALFTQPDKAVGRKQILTPSDTKAFLSQNYPSIPIFTPSSLKDKNIIREIKDLNPDFIVVAAYGKILPKAILDLAPCVNLHASLLPKYRGASPIQSAILNKDEKSGVCTMLMEEGLDTGAILESLECDIKDKNSSEVFELLANLAAKIILSTLLNFDKITPKKQEESLATLCRKIKKEDGLINLQNARELYQKYLAFTPWPGVFLENGLKFLELELVDELKQNAKMGEILELEKESFLLACKQGVLRIKKLQESGKKALDGRTYLNGKRLKSEDSLC.

A (6S)-5,6,7,8-tetrahydrofolate-binding site is contributed by 111 to 114 (SLLP).

Belongs to the Fmt family.

It catalyses the reaction L-methionyl-tRNA(fMet) + (6R)-10-formyltetrahydrofolate = N-formyl-L-methionyl-tRNA(fMet) + (6S)-5,6,7,8-tetrahydrofolate + H(+). In terms of biological role, attaches a formyl group to the free amino group of methionyl-tRNA(fMet). The formyl group appears to play a dual role in the initiator identity of N-formylmethionyl-tRNA by promoting its recognition by IF2 and preventing the misappropriation of this tRNA by the elongation apparatus. In Campylobacter jejuni subsp. jejuni serotype O:2 (strain ATCC 700819 / NCTC 11168), this protein is Methionyl-tRNA formyltransferase.